A 157-amino-acid chain; its full sequence is 6,7-dimethyl-8-ribityllumazine synthase (157 aa).

Residues F22, 57 to 59 (AYE), and 81 to 83 (TVI) contribute to the 5-amino-6-(D-ribitylamino)uracil site. 86-87 (GT) is a binding site for (2S)-2-hydroxy-3-oxobutyl phosphate. The Proton donor role is filled by H89. F114 serves as a coordination point for 5-amino-6-(D-ribitylamino)uracil. R128 provides a ligand contact to (2S)-2-hydroxy-3-oxobutyl phosphate.

It belongs to the DMRL synthase family. As to quaternary structure, forms an icosahedral capsid composed of 60 subunits, arranged as a dodecamer of pentamers.

The enzyme catalyses (2S)-2-hydroxy-3-oxobutyl phosphate + 5-amino-6-(D-ribitylamino)uracil = 6,7-dimethyl-8-(1-D-ribityl)lumazine + phosphate + 2 H2O + H(+). It participates in cofactor biosynthesis; riboflavin biosynthesis; riboflavin from 2-hydroxy-3-oxobutyl phosphate and 5-amino-6-(D-ribitylamino)uracil: step 1/2. Catalyzes the formation of 6,7-dimethyl-8-ribityllumazine by condensation of 5-amino-6-(D-ribitylamino)uracil with 3,4-dihydroxy-2-butanone 4-phosphate. This is the penultimate step in the biosynthesis of riboflavin. This is 6,7-dimethyl-8-ribityllumazine synthase from Histophilus somni (strain 129Pt) (Haemophilus somnus).